The sequence spans 232 residues: Peptide deformylase (232 aa).

Fe cation is bound by residues Cys135 and His178. Residue Glu179 is part of the active site. Position 182 (His182) interacts with Fe cation.

This sequence belongs to the polypeptide deformylase family. Requires Fe(2+) as cofactor.

The catalysed reaction is N-terminal N-formyl-L-methionyl-[peptide] + H2O = N-terminal L-methionyl-[peptide] + formate. Removes the formyl group from the N-terminal Met of newly synthesized proteins. Requires at least a dipeptide for an efficient rate of reaction. N-terminal L-methionine is a prerequisite for activity but the enzyme has broad specificity at other positions. This Deinococcus radiodurans (strain ATCC 13939 / DSM 20539 / JCM 16871 / CCUG 27074 / LMG 4051 / NBRC 15346 / NCIMB 9279 / VKM B-1422 / R1) protein is Peptide deformylase.